A 286-amino-acid polypeptide reads, in one-letter code: 4-hydroxybenzoate octaprenyltransferase (286 aa).

Helical transmembrane passes span 21 to 40 (GTLL…AGGM), 95 to 115 (ILFV…NGLV), 142 to 162 (FLGI…TGEV), 167 to 187 (WWLF…YAMV), 210 to 230 (QIIG…GWSA), 235 to 255 (LYGL…MLIF), and 266 to 286 (FLNN…DYLI).

The protein belongs to the UbiA prenyltransferase family. Mg(2+) serves as cofactor.

It is found in the cell inner membrane. The enzyme catalyses all-trans-octaprenyl diphosphate + 4-hydroxybenzoate = 4-hydroxy-3-(all-trans-octaprenyl)benzoate + diphosphate. Its pathway is cofactor biosynthesis; ubiquinone biosynthesis. Its function is as follows. Catalyzes the prenylation of para-hydroxybenzoate (PHB) with an all-trans polyprenyl group. Mediates the second step in the final reaction sequence of ubiquinone-8 (UQ-8) biosynthesis, which is the condensation of the polyisoprenoid side chain with PHB, generating the first membrane-bound Q intermediate 3-octaprenyl-4-hydroxybenzoate. The chain is 4-hydroxybenzoate octaprenyltransferase from Shewanella baltica (strain OS223).